The following is a 543-amino-acid chain: ADIPOR-like receptor IZH3 (543 aa).

The Lumenal segment spans residues 1 to 259; that stretch reads MMDSSSKSLT…NWYGWHNETS (259 aa). Asn45, Asn123, Asn153, and Asn256 each carry an N-linked (GlcNAc...) asparagine glycan. A helical membrane pass occupies residues 260-280; sequence NIWSHLLGAIYIIYLAIYDFP. The Cytoplasmic portion of the chain corresponds to 281–295; sequence QSEVWRNSQVPPQAR. Residues 296–316 traverse the membrane as a helical segment; that stretch reads WIVFMFLAAALKCMLSSVFWH. Residues 317–330 are Lumenal-facing; it reads TFNGTSFLKLRSKF. N-linked (GlcNAc...) asparagine glycosylation occurs at Asn319. A helical membrane pass occupies residues 331–353; that stretch reads ACVDYSGITILITASILTTEFVT. The Cytoplasmic segment spans residues 354–357; that stretch reads MYSC. A helical transmembrane segment spans residues 358-378; it reads YWAMYTYMSISLALGVFGVFM. Residues 379 to 395 are Lumenal-facing; sequence NWSPRFDRPEARPLRIR. Residues 396 to 416 form a helical membrane-spanning segment; sequence FFILLATMGVLSFLHLIFLTD. Topologically, residues 417–425 are cytoplasmic; it reads LHYAATLFS. A helical membrane pass occupies residues 426-446; sequence PVTYKSVVWYLVGVVFYGSFI. The Lumenal portion of the chain corresponds to 447–505; it reads PERFRSDVQVDKTIPTNYELSTDLEIITKQREIHFREVPTAHSKCSSCPSHAKSFKSLW. Residues 506 to 526 traverse the membrane as a helical segment; the sequence is WVDYFGCSHTFWHFFVVLGVI. Over 527 to 543 the chain is Cytoplasmic; that stretch reads GHYRAILDMFAKRWILS.

It belongs to the ADIPOR family.

It is found in the endoplasmic reticulum membrane. ADIPOR-like receptor involved in zinc metabolism either by altering membrane sterol content or by directly altering cellular zinc levels. In Saccharomyces cerevisiae (strain ATCC 204508 / S288c) (Baker's yeast), this protein is ADIPOR-like receptor IZH3 (IZH3).